The chain runs to 177 residues: Early nodulin-like protein 6 (177 aa).

The N-terminal stretch at 1-23 is a signal peptide; it reads MGGQKIVLLSIFVCFYVFSLVSC. Residues 24–127 form the Phytocyanin domain; sequence TEFEAGGENG…GQKMIIKVME (104 aa). Residue Asn-41 is glycosylated (N-linked (GlcNAc...) asparagine). A disulfide bond links Cys-81 and Cys-115. A lipid anchor (GPI-anchor amidated asparagine) is attached at Asn-149. A propeptide spans 150–177 (removed in mature form); it reads HAVRKTSRFLGAGLVTISILVITVFSLV.

This sequence belongs to the early nodulin-like (ENODL) family. Confined to flowers.

Its subcellular location is the cell membrane. Functionally, may act as a carbohydrate transporter. This Arabidopsis thaliana (Mouse-ear cress) protein is Early nodulin-like protein 6.